The sequence spans 538 residues: Probable ribonuclease 3 (538 aa).

2 consecutive RNase III domains span residues 24 to 149 (IKSY…LNFG) and 238 to 381 (ASQM…EGYL). Positions 408–477 (LISQNIEVLH…NYKDLILQLY (70 aa)) constitute a DRBM domain.

Belongs to the ribonuclease III family.

It carries out the reaction Endonucleolytic cleavage to 5'-phosphomonoester.. Digests double-stranded RNA. This chain is Probable ribonuclease 3, found in Acanthamoeba polyphaga (Amoeba).